A 247-amino-acid chain; its full sequence is Segregation and condensation protein A (247 aa).

Belongs to the ScpA family. Component of a cohesin-like complex composed of ScpA, ScpB and the Smc homodimer, in which ScpA and ScpB bind to the head domain of Smc. The presence of the three proteins is required for the association of the complex with DNA.

The protein resides in the cytoplasm. In terms of biological role, participates in chromosomal partition during cell division. May act via the formation of a condensin-like complex containing Smc and ScpB that pull DNA away from mid-cell into both cell halves. The sequence is that of Segregation and condensation protein A from Caldanaerobacter subterraneus subsp. tengcongensis (strain DSM 15242 / JCM 11007 / NBRC 100824 / MB4) (Thermoanaerobacter tengcongensis).